A 336-amino-acid chain; its full sequence is Tryptophan--tRNA ligase (336 aa).

ATP contacts are provided by residues 9-11 (QPS) and 17-18 (GN). The 'HIGH' region motif lies at 10-18 (PSGTPTIGN). L-tryptophan is bound at residue Asp134. ATP is bound by residues 146–148 (GDD), Ile189, and 198–202 (KMSKS). The 'KMSKS' region signature appears at 198 to 202 (KMSKS).

It belongs to the class-I aminoacyl-tRNA synthetase family. In terms of assembly, homodimer.

It localises to the cytoplasm. It catalyses the reaction tRNA(Trp) + L-tryptophan + ATP = L-tryptophyl-tRNA(Trp) + AMP + diphosphate + H(+). Functionally, catalyzes the attachment of tryptophan to tRNA(Trp). This chain is Tryptophan--tRNA ligase, found in Enterococcus faecalis (strain ATCC 700802 / V583).